We begin with the raw amino-acid sequence, 131 residues long: Glycine cleavage system H protein (131 aa).

Residues 24–106 (RAIVGISDHA…YGEGWIMVIE (83 aa)) form the Lipoyl-binding domain. An N6-lipoyllysine modification is found at lysine 65.

The protein belongs to the GcvH family. The glycine cleavage system is composed of four proteins: P, T, L and H. It depends on (R)-lipoate as a cofactor.

Its function is as follows. The glycine cleavage system catalyzes the degradation of glycine. The H protein shuttles the methylamine group of glycine from the P protein to the T protein. The polypeptide is Glycine cleavage system H protein (Xylella fastidiosa (strain 9a5c)).